Consider the following 152-residue polypeptide: Nucleoside diphosphate kinase (152 aa).

Residues Lys-12, Phe-60, Arg-88, Thr-94, Arg-105, and Asn-115 each contribute to the ATP site. His-118 acts as the Pros-phosphohistidine intermediate in catalysis.

It belongs to the NDK family. Homotrimer. The cofactor is Mg(2+).

It carries out the reaction a 2'-deoxyribonucleoside 5'-diphosphate + ATP = a 2'-deoxyribonucleoside 5'-triphosphate + ADP. The catalysed reaction is a ribonucleoside 5'-diphosphate + ATP = a ribonucleoside 5'-triphosphate + ADP. Functionally, major role in the synthesis of nucleoside triphosphates other than ATP. The ATP gamma phosphate is transferred to the NDP beta phosphate via a ping-pong mechanism, using a phosphorylated active-site intermediate. This chain is Nucleoside diphosphate kinase (ndk-1), found in Neurospora crassa (strain ATCC 24698 / 74-OR23-1A / CBS 708.71 / DSM 1257 / FGSC 987).